Here is a 120-residue protein sequence, read N- to C-terminus: MIVGIGVDLVSVRRMQQLLERFGNRFTARAFSEVEIRDSLQYKNAHAVARHFAKRFAAKEAYVKAVGLGFGRGIEMRGVSVFNDALGKPRIAVSGDVGHNIELSLSDDGEYAIAFVVLHV.

Positions 8 and 60 each coordinate Mg(2+).

The protein belongs to the P-Pant transferase superfamily. AcpS family. Mg(2+) serves as cofactor.

It is found in the cytoplasm. The enzyme catalyses apo-[ACP] + CoA = holo-[ACP] + adenosine 3',5'-bisphosphate + H(+). Its function is as follows. Transfers the 4'-phosphopantetheine moiety from coenzyme A to a Ser of acyl-carrier-protein. The protein is Holo-[acyl-carrier-protein] synthase of Anaplasma marginale (strain St. Maries).